A 55-amino-acid polypeptide reads, in one-letter code: Large ribosomal subunit protein bL33 (55 aa).

It belongs to the bacterial ribosomal protein bL33 family.

In Renibacterium salmoninarum (strain ATCC 33209 / DSM 20767 / JCM 11484 / NBRC 15589 / NCIMB 2235), this protein is Large ribosomal subunit protein bL33.